Consider the following 247-residue polypeptide: MNGADLRIGIAGITGRMGKLLAEAVPLAGATLAGGIGRDGDLAALARESDVVIDFTVAATVSRHAGILAAAGTPWVLGTTGFDPAAEADIADAAARIPVFQAANFAPGVNLVIALAERLGATLAAETHDAEILEMHHRQKIDAPSGTALAIGAAVARGRGVDLAAVKDSGRDGHTGKRETGAIGFAALRGGQIVGSHSAIFTSAVEQITLTHHALDRRIFAEGAVRAALWLAGRAPGRYGMRDLLGL.

NAD(+)-binding positions include 12–17 (GITGRM), 78–80 (GTT), and 102–105 (AANF). The active-site Proton donor/acceptor is the H136. H137 contributes to the (S)-2,3,4,5-tetrahydrodipicolinate binding site. K140 serves as the catalytic Proton donor. 146–147 (GT) is a (S)-2,3,4,5-tetrahydrodipicolinate binding site.

It belongs to the DapB family.

It is found in the cytoplasm. The enzyme catalyses (S)-2,3,4,5-tetrahydrodipicolinate + NAD(+) + H2O = (2S,4S)-4-hydroxy-2,3,4,5-tetrahydrodipicolinate + NADH + H(+). The catalysed reaction is (S)-2,3,4,5-tetrahydrodipicolinate + NADP(+) + H2O = (2S,4S)-4-hydroxy-2,3,4,5-tetrahydrodipicolinate + NADPH + H(+). It functions in the pathway amino-acid biosynthesis; L-lysine biosynthesis via DAP pathway; (S)-tetrahydrodipicolinate from L-aspartate: step 4/4. Catalyzes the conversion of 4-hydroxy-tetrahydrodipicolinate (HTPA) to tetrahydrodipicolinate. In Acidiphilium cryptum (strain JF-5), this protein is 4-hydroxy-tetrahydrodipicolinate reductase.